The primary structure comprises 242 residues: Large ribosomal subunit protein uL1 (242 aa).

It belongs to the universal ribosomal protein uL1 family. As to quaternary structure, part of the 50S ribosomal subunit.

In terms of biological role, binds directly to 23S rRNA. The L1 stalk is quite mobile in the ribosome, and is involved in E site tRNA release. Its function is as follows. Protein L1 is also a translational repressor protein, it controls the translation of the L11 operon by binding to its mRNA. This is Large ribosomal subunit protein uL1 from Sulfurihydrogenibium sp. (strain YO3AOP1).